A 613-amino-acid polypeptide reads, in one-letter code: Cleavage and polyadenylation specificity factor subunit 3-II (613 aa).

The HXHXDH motif signature appears at 67 to 72 (HFHMDH).

It belongs to the metallo-beta-lactamase superfamily. RNA-metabolizing metallo-beta-lactamase-like family. INTS11 subfamily. In terms of assembly, component of the CPSF complex, at least composed of CPSF160, CPSF100, CPSF73-I, CPSF73-II, CPSF30, FY and FIPS5. Interacts with CPSF30, CPSF100, CPSF160 and FY. Highly expressed in senescence leaves, petals, stamens, pollen and late stages of siliques with seeds. Also detected in roots, stems, leaves and seedlings.

It localises to the nucleus. Its function is as follows. Component of the cleavage and polyadenylation specificity factor (CPSF) complex that play a key role in pre-mRNA 3'-end formation, recognizing the AAUAAA signal sequence and interacting with poly(A) polymerase and other factors to bring about cleavage and poly(A) addition. May function as mRNA 3'-end-processing endonuclease and also be involved in the histone 3'-end pre-mRNA processing. The sequence is that of Cleavage and polyadenylation specificity factor subunit 3-II (CPSF73-II) from Arabidopsis thaliana (Mouse-ear cress).